We begin with the raw amino-acid sequence, 699 residues long: Elongation factor G (699 aa).

A tr-type G domain is found at 8–289; the sequence is ERYRNIGISA…AVVEYMPAPT (282 aa). Residues 17-24, 88-92, and 142-145 contribute to the GTP site; these read AHIDAGKT, DTPGH, and NKMD.

It belongs to the TRAFAC class translation factor GTPase superfamily. Classic translation factor GTPase family. EF-G/EF-2 subfamily.

The protein resides in the cytoplasm. Catalyzes the GTP-dependent ribosomal translocation step during translation elongation. During this step, the ribosome changes from the pre-translocational (PRE) to the post-translocational (POST) state as the newly formed A-site-bound peptidyl-tRNA and P-site-bound deacylated tRNA move to the P and E sites, respectively. Catalyzes the coordinated movement of the two tRNA molecules, the mRNA and conformational changes in the ribosome. In Variovorax paradoxus (strain S110), this protein is Elongation factor G.